The primary structure comprises 229 residues: Urease accessory protein UreF (229 aa).

The protein belongs to the UreF family. In terms of assembly, ureD, UreF and UreG form a complex that acts as a GTP-hydrolysis-dependent molecular chaperone, activating the urease apoprotein by helping to assemble the nickel containing metallocenter of UreC. The UreE protein probably delivers the nickel.

Its subcellular location is the cytoplasm. Required for maturation of urease via the functional incorporation of the urease nickel metallocenter. The chain is Urease accessory protein UreF from Staphylococcus epidermidis (strain ATCC 35984 / DSM 28319 / BCRC 17069 / CCUG 31568 / BM 3577 / RP62A).